A 523-amino-acid polypeptide reads, in one-letter code: GMP synthase [glutamine-hydrolyzing] (523 aa).

Residues 9 to 198 (PVLVVDFGAQ…LTEIAGLEQN (190 aa)) enclose the Glutamine amidotransferase type-1 domain. Cys86 (nucleophile) is an active-site residue. Catalysis depends on residues His172 and Glu174. The GMPS ATP-PPase domain occupies 199–397 (WTAANIAEEL…LGLPEEIVGR (199 aa)). An ATP-binding site is contributed by 227 to 233 (SGGVDSA).

As to quaternary structure, homodimer.

It catalyses the reaction XMP + L-glutamine + ATP + H2O = GMP + L-glutamate + AMP + diphosphate + 2 H(+). Its pathway is purine metabolism; GMP biosynthesis; GMP from XMP (L-Gln route): step 1/1. Its function is as follows. Catalyzes the synthesis of GMP from XMP. The protein is GMP synthase [glutamine-hydrolyzing] of Corynebacterium glutamicum (strain R).